The sequence spans 1005 residues: Small G protein signaling modulator 2 (1005 aa).

Residues 34 to 191 (HEDSSHIIAL…EYTKLKTADH (158 aa)) enclose the RUN domain. 2 disordered regions span residues 95-121 (QAEG…KAPA) and 205-236 (HRIR…SASE). Phosphoserine is present on residues Ser402 and Leu444. The Rab-GAP TBC domain occupies 566-938 (GVEHEIRKDV…AVWEVIWAAR (373 aa)). Disordered regions lie at residues 657–687 (FISV…AGTP) and 729–761 (GFED…QETL). The span at 672 to 681 (EDSKPKREQE) shows a compositional bias: basic and acidic residues. A compositionally biased stretch (acidic residues) spans 730-740 (FEDDGAGEDGS).

This sequence belongs to the RUTBC family. Interacts with RAB4A, RAB11A, RAP1A, RAP1B, RAP2A and RAP2B. No interaction with RAB27A. Interacts with RAB9A. Widely expressed.

Its subcellular location is the cytoplasm. The protein localises to the melanosome. Functionally, possesses GTPase activator activity towards RAB32, RAB33B and RAB38. Regulates the trafficking of melanogenic enzymes TYR, TYRP1 and DCT/TYRP2 to melanosomes in melanocytes by inactivating RAB32 and RAB38. Inhibits RAB32 and RAB38 activation both directly by promoting their GTPase activity and indirectly by disrupting the RAB9A-HPS4 interaction which is required for RAB32/38 activation. This chain is Small G protein signaling modulator 2 (Sgsm2), found in Mus musculus (Mouse).